The sequence spans 103 residues: 6-pyruvoyl tetrahydrobiopterin synthase (103 aa).

A1 carries the N-acetylalanine modification. H27 provides a ligand contact to Zn(2+). Residues H53 and E92 each act as charge relay system in the active site.

It belongs to the PTPS family. As to quaternary structure, homohexamer formed of two homotrimers in a head to head fashion. Requires Zn(2+) as cofactor.

It catalyses the reaction 7,8-dihydroneopterin 3'-triphosphate = 6-pyruvoyl-5,6,7,8-tetrahydropterin + triphosphate + H(+). Its pathway is cofactor biosynthesis; tetrahydrobiopterin biosynthesis; tetrahydrobiopterin from 7,8-dihydroneopterin triphosphate: step 1/3. Its function is as follows. Involved in the biosynthesis of tetrahydrobiopterin, an essential cofactor of aromatic amino acid hydroxylases. Catalyzes the transformation of 7,8-dihydroneopterin triphosphate into 6-pyruvoyl tetrahydropterin. The polypeptide is 6-pyruvoyl tetrahydrobiopterin synthase (pts) (Salmo salar (Atlantic salmon)).